The chain runs to 284 residues: P2R1A-PPP2R2A-interacting phosphatase regulator 1 (284 aa).

Disordered stretches follow at residues 1-32 (MAQEKMELDLELPPGSAAAPSDGGGLRRSNSA), 112-198 (EESL…PIKR), and 235-284 (AHTL…LPID). Low complexity-rich tracts occupy residues 152 to 164 (SPSLQSLVSSSGL) and 172 to 184 (PTRRFSSRRSQSP). Polar residues predominate over residues 258-269 (STGSPVSLSDSR).

Belongs to the FAM122 family.

The protein localises to the nucleus. The protein resides in the cytoplasm. Functionally, acts as an inhibitor of serine/threonine-protein phosphatase 2A (PP2A) activity. Potentiates ubiquitin-mediated proteasomal degradation of serine/threonine-protein phosphatase 2A catalytic subunit alpha (PPP2CA). Inhibits PP2A-mediated dephosphorylation of WEE1, promoting ubiquitin-mediated proteolysis of WEE1, thereby releasing G2/M checkpoint. The chain is P2R1A-PPP2R2A-interacting phosphatase regulator 1 from Gallus gallus (Chicken).